Consider the following 256-residue polypeptide: Transcription factor BHLH094 (256 aa).

The tract at residues methionine 1–tyrosine 125 is disordered. Residues proline 79–arginine 97 show a composition bias toward basic and acidic residues. The basic motif; degenerate stretch occupies residues glutamine 134–arginine 147. The bHLH domain maps to glutamine 134–leucine 184. Residues glutamate 148–leucine 184 are helix-loop-helix motif.

This sequence belongs to the bHLH protein family. Interacts with RSS3. Forms a ternary complex with RSS3 and TIFY11A/JAZ9 in the nucleus.

The protein localises to the nucleus. Functionally, transcription factor that forms a ternary complex with RSS3 and TIFY11A/JAZ9 to negatively regulate jasmonate-responsive genes. The polypeptide is Transcription factor BHLH094 (Oryza sativa subsp. japonica (Rice)).